A 360-amino-acid chain; its full sequence is Phosphoserine aminotransferase (360 aa).

Arginine 41 is a binding site for L-glutamate. Pyridoxal 5'-phosphate is bound by residues 75-76 (AS), tryptophan 99, threonine 152, aspartate 171, and glutamine 194. Lysine 195 bears the N6-(pyridoxal phosphate)lysine mark. 236 to 237 (NT) provides a ligand contact to pyridoxal 5'-phosphate.

It belongs to the class-V pyridoxal-phosphate-dependent aminotransferase family. SerC subfamily. As to quaternary structure, homodimer. It depends on pyridoxal 5'-phosphate as a cofactor.

The protein localises to the cytoplasm. It carries out the reaction O-phospho-L-serine + 2-oxoglutarate = 3-phosphooxypyruvate + L-glutamate. It catalyses the reaction 4-(phosphooxy)-L-threonine + 2-oxoglutarate = (R)-3-hydroxy-2-oxo-4-phosphooxybutanoate + L-glutamate. The protein operates within amino-acid biosynthesis; L-serine biosynthesis; L-serine from 3-phospho-D-glycerate: step 2/3. It participates in cofactor biosynthesis; pyridoxine 5'-phosphate biosynthesis; pyridoxine 5'-phosphate from D-erythrose 4-phosphate: step 3/5. Its function is as follows. Catalyzes the reversible conversion of 3-phosphohydroxypyruvate to phosphoserine and of 3-hydroxy-2-oxo-4-phosphonooxybutanoate to phosphohydroxythreonine. The protein is Phosphoserine aminotransferase of Porphyromonas gingivalis (strain ATCC 33277 / DSM 20709 / CIP 103683 / JCM 12257 / NCTC 11834 / 2561).